Reading from the N-terminus, the 96-residue chain is Co-chaperonin GroES (96 aa).

Belongs to the GroES chaperonin family. As to quaternary structure, heptamer of 7 subunits arranged in a ring. Interacts with the chaperonin GroEL.

The protein resides in the cytoplasm. Its function is as follows. Together with the chaperonin GroEL, plays an essential role in assisting protein folding. The GroEL-GroES system forms a nano-cage that allows encapsulation of the non-native substrate proteins and provides a physical environment optimized to promote and accelerate protein folding. GroES binds to the apical surface of the GroEL ring, thereby capping the opening of the GroEL channel. This Citrifermentans bemidjiense (strain ATCC BAA-1014 / DSM 16622 / JCM 12645 / Bem) (Geobacter bemidjiensis) protein is Co-chaperonin GroES.